A 239-amino-acid polypeptide reads, in one-letter code: Leucine-rich repeat-containing protein 57 (239 aa).

Gly2 is lipidated: N-myristoyl glycine. 8 LRR repeats span residues 39 to 60, 63 to 85, 86 to 107, 109 to 130, 132 to 153, 154 to 175, 177 to 197, and 202 to 222; these read NLRTIDLSNNKIDSLPPLIIGK, LLKSLSLNNNKLTVLPDELCNLK, KLETLSLNNNHLRELPSTFGQL, ALKTLSLSGNQLGALPPQLCCL, HLDVVDLSKNQIRSIPDTVGEL, QAIELNLNQNQISQLSVKISCC, RLKVLRLEENCLELSMLPQSI, and QICLLAVEGNLFEIKKFRELE.

The protein localises to the membrane. This chain is Leucine-rich repeat-containing protein 57 (Lrrc57), found in Mus musculus (Mouse).